The following is a 102-amino-acid chain: Small ribosomal subunit protein uS14 (102 aa).

The protein belongs to the universal ribosomal protein uS14 family. As to quaternary structure, part of the 30S ribosomal subunit. Contacts proteins S3 and S10.

Binds 16S rRNA, required for the assembly of 30S particles and may also be responsible for determining the conformation of the 16S rRNA at the A site. This is Small ribosomal subunit protein uS14 from Wolbachia pipientis wMel.